A 163-amino-acid chain; its full sequence is NADPH-dependent 7-cyano-7-deazaguanine reductase (163 aa).

C54 acts as the Thioimide intermediate in catalysis. Catalysis depends on D61, which acts as the Proton donor. Substrate-binding positions include 76–78 and 95–96; these read VES and HE.

The protein belongs to the GTP cyclohydrolase I family. QueF type 1 subfamily.

It localises to the cytoplasm. The enzyme catalyses 7-aminomethyl-7-carbaguanine + 2 NADP(+) = 7-cyano-7-deazaguanine + 2 NADPH + 3 H(+). The protein operates within tRNA modification; tRNA-queuosine biosynthesis. In terms of biological role, catalyzes the NADPH-dependent reduction of 7-cyano-7-deazaguanine (preQ0) to 7-aminomethyl-7-deazaguanine (preQ1). In Streptococcus thermophilus (strain CNRZ 1066), this protein is NADPH-dependent 7-cyano-7-deazaguanine reductase.